The chain runs to 326 residues: Thiazole synthase (326 aa).

The active-site Schiff-base intermediate with DXP is the Lys-168. Residues Gly-229, 255–256, and 277–278 each bind 1-deoxy-D-xylulose 5-phosphate; these read AG and NT.

Belongs to the ThiG family. In terms of assembly, homotetramer. Forms heterodimers with either ThiH or ThiS.

The protein localises to the cytoplasm. The enzyme catalyses [ThiS sulfur-carrier protein]-C-terminal-Gly-aminoethanethioate + 2-iminoacetate + 1-deoxy-D-xylulose 5-phosphate = [ThiS sulfur-carrier protein]-C-terminal Gly-Gly + 2-[(2R,5Z)-2-carboxy-4-methylthiazol-5(2H)-ylidene]ethyl phosphate + 2 H2O + H(+). It functions in the pathway cofactor biosynthesis; thiamine diphosphate biosynthesis. In terms of biological role, catalyzes the rearrangement of 1-deoxy-D-xylulose 5-phosphate (DXP) to produce the thiazole phosphate moiety of thiamine. Sulfur is provided by the thiocarboxylate moiety of the carrier protein ThiS. In vitro, sulfur can be provided by H(2)S. The sequence is that of Thiazole synthase from Magnetococcus marinus (strain ATCC BAA-1437 / JCM 17883 / MC-1).